A 479-amino-acid chain; its full sequence is MASIRELHSQLVRKERSAVEIAEAALQRIETLEPQLKSFLHVTADQAIAQAKAVDQRIAAGEEISLLAGIPIGIKDNLCTRGIPTTCASKILQGFVPPYESTVTQRLAEAGAVAVGKTNLDEFAMGSSTENSAYQTTANPWDLTRVPGGSSGGSAAAVAADECVVALGSDTGGSIRQPAAFCGVVGLKPTYGLVSRYGLVAYASSLDQIGPFSRSVEDTAILLGAIAGHDPKDATSLKVEVPDYTQFLKPSLAGIKVGVITETVTDSPAGQAMQAALEVLQGLGAEIREISCPRFAYGLPAYYIIAPSEASANLARYDGVKYGYRVEEAETLIDMYCRTRAEGFGSEVKRRIMIGTYALSAGYYDAYYLKAQKVRTLIKQDFEAAFAEVDVLVSPTTPTTAFKAGEKTADPLSMYLSDLMTIPVNLAGLPGLSLPCGFDEAGLPYGLQIIGNVLREDQVLHTAYAYEQATEWHLRQPAL.

Active-site charge relay system residues include Lys-75 and Ser-150. The active-site Acyl-ester intermediate is Ser-174.

This sequence belongs to the amidase family. GatA subfamily. As to quaternary structure, heterotrimer of A, B and C subunits.

The catalysed reaction is L-glutamyl-tRNA(Gln) + L-glutamine + ATP + H2O = L-glutaminyl-tRNA(Gln) + L-glutamate + ADP + phosphate + H(+). Allows the formation of correctly charged Gln-tRNA(Gln) through the transamidation of misacylated Glu-tRNA(Gln) in organisms which lack glutaminyl-tRNA synthetase. The reaction takes place in the presence of glutamine and ATP through an activated gamma-phospho-Glu-tRNA(Gln). This is Glutamyl-tRNA(Gln) amidotransferase subunit A from Synechococcus elongatus (strain ATCC 33912 / PCC 7942 / FACHB-805) (Anacystis nidulans R2).